We begin with the raw amino-acid sequence, 504 residues long: Pentatricopeptide repeat-containing protein At1g09220, mitochondrial (504 aa).

The N-terminal 87 residues, 1–87 (MFLFSSRRIT…FLFNPLLRCY (87 aa)), are a transit peptide targeting the mitochondrion. 10 PPR repeats span residues 76 to 110 (KLFLFNPLLRCYSLGETPLHAYFLYDQLQRLHFLS), 120 to 156 (DSFTYLFLLKASSNPRFPSLLLGIGLHGLTLKLGFES), 157 to 187 (HVYVQTALVGMYLVGGNMIDAHKVFDEMPER), 188 to 222 (NPVTWNVMITGLTNLGDFEKALCFLEKMPNRTVVS), 223 to 253 (WTTIIDGYARVDKPKEAILLFSRMVACDAIK), 255 to 289 (NEITILAILPAVWNLGDLKMCGSVHAYVGKRGFVP), 291 to 321 (DIRVTNSLIDAYAKCGCIQSAFKFFIEIPNG), 324 to 358 (NLVSWTTMISAFAIHGMGKEAVSMFKDMERLGLKP), 359 to 390 (NRVTMISVLNACSHGGLAEEEFLEFFNTMVNE), and 396 to 430 (DVKHYGCLVDMLRRKGRLEEAEKIALEIPIEEKAV). Positions 431-504 (VWRMLLGACS…AKLPGHSQVT (74 aa)) are type E motif; degenerate.

It belongs to the PPR family. PCMP-E subfamily.

The protein localises to the mitochondrion. This Arabidopsis thaliana (Mouse-ear cress) protein is Pentatricopeptide repeat-containing protein At1g09220, mitochondrial (PCMP-E25).